A 306-amino-acid polypeptide reads, in one-letter code: MSVDTSVRLPGMPVKNPVMTASGTFGYGLEFAPYGDLRSLGGIVVKGLSLAPRLGNPMPRIAETPCGMLNAIGLQNCGVEKFLRDKLPRLPWRETPIIANLYACDADEFAELAGVLSAEEGVAALEVNISCPNVKAGGIAFGQDPCMAGKLAEAVKKRAGDKPVWVKLSPNVTDIVSIARAAVLGGADALTCINTLTGMSVDIRSRKPRLANVIGGLSGPAIKPVALRAVWQVCQAVSAPVIGVGGISSAEDVLEFILVGAHAVQIGTANFMRPDMAFRIAERLPQLMAELGIEDLASYRGSLRVG.

Residues Ser-22 and 46 to 47 contribute to the FMN site; that span reads KG. Substrate is bound by residues Lys-46 and 70 to 74; that span reads NAIGL. Positions 100 and 128 each coordinate FMN. Asn-128 contacts substrate. Catalysis depends on Cys-131, which acts as the Nucleophile. FMN is bound by residues Lys-167 and Ile-193. 194–195 is a binding site for substrate; that stretch reads NT. FMN-binding positions include Gly-219, 245–246, and 267–268; these read GG and GT.

This sequence belongs to the dihydroorotate dehydrogenase family. Type 1 subfamily. Heterotetramer of 2 PyrK and 2 PyrD type B subunits. Requires FMN as cofactor.

Its subcellular location is the cytoplasm. The enzyme catalyses (S)-dihydroorotate + NAD(+) = orotate + NADH + H(+). The protein operates within pyrimidine metabolism; UMP biosynthesis via de novo pathway; orotate from (S)-dihydroorotate (NAD(+) route): step 1/1. In terms of biological role, catalyzes the conversion of dihydroorotate to orotate with NAD(+) as electron acceptor. This is Dihydroorotate dehydrogenase B (NAD(+)), catalytic subunit (pyrD) from Solidesulfovibrio magneticus (strain ATCC 700980 / DSM 13731 / RS-1) (Desulfovibrio magneticus).